A 135-amino-acid chain; its full sequence is Class I hydrophobin dewB (135 aa).

The signal sequence occupies residues 1 to 17 (MKFIGLATLSLFALASA). 4 disulfides stabilise this stretch: Cys35–Cys109, Cys43–Cys103, Cys44–Cys84, and Cys110–Cys128.

The protein belongs to the fungal hydrophobin family. In terms of assembly, self-assembles to form functional amyloid fibrils called rodlets. Self-assembly into fibrillar rodlets occurs spontaneously at hydrophobic:hydrophilic interfaces and the rodlets further associate laterally to form amphipathic monolayers.

It is found in the secreted. Its subcellular location is the spore wall. In terms of biological role, aerial growth, conidiation, and dispersal of filamentous fungi in the environment rely upon a capability of their secreting small amphipathic proteins called hydrophobins (HPBs) with low sequence identity. Class I can self-assemble into an outermost layer of rodlet bundles on aerial cell surfaces, conferring cellular hydrophobicity that supports fungal growth, development and dispersal; whereas Class II form highly ordered films at water-air interfaces through intermolecular interactions but contribute nothing to the rodlet structure. DewB is a class I hydrophobin that contributes to the hydrophobicity of the spore surface. The protein is Class I hydrophobin dewB of Emericella nidulans (strain FGSC A4 / ATCC 38163 / CBS 112.46 / NRRL 194 / M139) (Aspergillus nidulans).